We begin with the raw amino-acid sequence, 86 residues long: Small ribosomal subunit protein uS17 (86 aa).

This sequence belongs to the universal ribosomal protein uS17 family. Part of the 30S ribosomal subunit.

One of the primary rRNA binding proteins, it binds specifically to the 5'-end of 16S ribosomal RNA. This chain is Small ribosomal subunit protein uS17, found in Streptococcus gordonii (strain Challis / ATCC 35105 / BCRC 15272 / CH1 / DL1 / V288).